Reading from the N-terminus, the 438-residue chain is Putative F-box/FBD/LRR-repeat protein At2g05300 (438 aa).

Residues 13–59 (EDRISQLPDPLLTQILNLLPTEEAVKTSVLSTRWRTLWLWVPNLELS) enclose the F-box domain. LRR repeat units follow at residues 135 to 166 (CDSL…RLKD), 167 to 192 (IVFH…KIDV), 235 to 261 (CLII…DISL), and 318 to 346 (YVTL…ILER). The FBD domain maps to 362-409 (SMSSVPECLLTSLEFVEFKAPICGLGPEMMLVWYFLKNSPTLKKLTLP).

This chain is Putative F-box/FBD/LRR-repeat protein At2g05300, found in Arabidopsis thaliana (Mouse-ear cress).